Reading from the N-terminus, the 158-residue chain is Flagellar assembly factor FliW (158 aa).

This sequence belongs to the FliW family. As to quaternary structure, interacts with translational regulator CsrA and flagellin(s).

It localises to the cytoplasm. Its function is as follows. Acts as an anti-CsrA protein, binds CsrA and prevents it from repressing translation of its target genes, one of which is flagellin. Binds to flagellin and participates in the assembly of the flagellum. This chain is Flagellar assembly factor FliW, found in Syntrophus aciditrophicus (strain SB).